Consider the following 762-residue polypeptide: Protein PHTF1 (762 aa).

A PHTF domain is found at 6 to 150 (RDAISWYQKK…VHCQIVSTQI (145 aa)). The next 3 membrane-spanning stretches (helical) occupy residues 77–97 (GLVR…VTSL), 99–119 (IFVW…LYLM), and 121–141 (PIVS…MGTV). The disordered stretch occupies residues 152–184 (RPSGNNGNRRRRKLRKTVNGDGTRDNGNNSPDK). Residues Asn179 and Asn224 are each glycosylated (N-linked (GlcNAc...) asparagine). Phosphoserine occurs at positions 272, 276, 277, 334, and 336. Residues 345–415 (AAFSQGSRSG…NTLHSGTKRD (71 aa)) are disordered. Over residues 348–364 (SQGSRSGMSGGSRSLNL) the composition is skewed to low complexity. Asn363 is a glycosylation site (N-linked (GlcNAc...) asparagine). Positions 365 to 376 (SRRDSESTRHDS) are enriched in basic and acidic residues. N-linked (GlcNAc...) asparagine glycosylation is present at Asn431. The next 4 membrane-spanning stretches (helical) occupy residues 473-493 (GVGY…FPFL), 515-535 (TLFC…INFF), 611-631 (VVVS…CAQV), and 645-665 (WEFL…ASLG). 2 N-linked (GlcNAc...) asparagine glycosylation sites follow: Asn674 and Asn733. A helical membrane pass occupies residues 737 to 757 (VVILSAVSGVISDLLGFNIRL).

Interacts with FEM1B. Highly expressed in testis.

It is found in the endoplasmic reticulum membrane. The protein resides in the golgi apparatus. The protein localises to the cis-Golgi network membrane. The chain is Protein PHTF1 from Rattus norvegicus (Rat).